A 320-amino-acid polypeptide reads, in one-letter code: Malate dehydrogenase (320 aa).

Residues 10–15 and Asp-34 each bind NAD(+); that span reads GSGMIG. Positions 83 and 89 each coordinate substrate. NAD(+) is bound by residues Asn-96 and 119–121; that span reads ITN. Residues Asn-121 and Arg-152 each coordinate substrate. His-176 (proton acceptor) is an active-site residue.

Belongs to the LDH/MDH superfamily. MDH type 3 family.

It catalyses the reaction (S)-malate + NAD(+) = oxaloacetate + NADH + H(+). Functionally, catalyzes the reversible oxidation of malate to oxaloacetate. This is Malate dehydrogenase from Brucella canis (strain ATCC 23365 / NCTC 10854 / RM-666).